Here is a 682-residue protein sequence, read N- to C-terminus: ATP-dependent DNA helicase RecG (682 aa).

The wedge domain stretch occupies residues 46-139; it reads ELRDLEEVKH…LKNGPHQEDK (94 aa). Residues 271–432 form the Helicase ATP-binding domain; it reads DMSSPYRMNR…VFGEMDVSVI (162 aa). An ATP-binding site is contributed by 284 to 291; that stretch reads GDVGSGKT. The DEAH box signature appears at 385–388; the sequence is DEQH. In terms of domain architecture, Helicase C-terminal spans 451–611; the sequence is MLDRILAFVE…GFELSEKDLE (161 aa).

Belongs to the helicase family. RecG subfamily. In terms of assembly, monomer. Interacts with SSB (sbbA), via the latter's 6 C-terminal residues. Colocalizes with DNA pol III subunit gamma/tau (dnaX).

Its subcellular location is the cytoplasm. It is found in the nucleoid. It catalyses the reaction Couples ATP hydrolysis with the unwinding of duplex DNA by translocating in the 3'-5' direction.. It carries out the reaction ATP + H2O = ADP + phosphate + H(+). Replication fork regression on Holliday junctions (HJ) is inhibited by DisA; DisA inhibits the ATPase activity of RecG. Functionally, critical role in recombination and DNA repair. Helps process Holliday junction intermediates to mature products by catalyzing branch migration. Has a DNA unwinding activity characteristic of a DNA helicase with 3'-5' polarity. Unwinds branched duplex DNA (Y-DNA), Holliday junction (HJ) DNA and partially replicated forks as well as catalyzing fork reversal/regression. Does not seem to unwind R-loops. Inhibits the diadenylate cyclase (DAC) activity of DisA in the presence but not absence of HJ DNA, possibly by relocating DisA from the junction. In Bacillus subtilis (strain 168), this protein is ATP-dependent DNA helicase RecG.